The following is a 101-amino-acid chain: Small ribosomal subunit protein uS14 (101 aa).

It belongs to the universal ribosomal protein uS14 family. In terms of assembly, part of the 30S ribosomal subunit. Contacts proteins S3 and S10.

Functionally, binds 16S rRNA, required for the assembly of 30S particles and may also be responsible for determining the conformation of the 16S rRNA at the A site. This chain is Small ribosomal subunit protein uS14, found in Zymomonas mobilis subsp. mobilis (strain ATCC 31821 / ZM4 / CP4).